The following is a 333-amino-acid chain: MGDWGFLEKLLDQVQEHSTVVGKIWLTVLFIFRILILGLAGESVWGDEQSDFECNTAQPGCTNVCYDQAFPISHIRYWVLQFLFVSTPTLIYLGHVIYLSRREERLRQKEGELRALPSKDPHVERALAAIEHQMAKISVAEDGRLRIRGALMGTYVISVLCKSVLEAGFLYGQWRLYGWTMEPVFVCQRAPCPHVVDCYVSRPTEKTIFIIFMLVVGVISLVLNLLELVHLLCRCVSREIKARRDHDTRPAQGSASDPYPEQVFFYLPMGEGPSSPPCPTYNGLSSTEQNWANLTTEERLTSTRPPPFVNAAPQGGQKSSSRPNSSASKKQYV.

The Cytoplasmic segment spans residues Met1 to Val20. A helical transmembrane segment spans residues Val21–Ala40. Topologically, residues Gly41–Arg76 are extracellular. A helical transmembrane segment spans residues Tyr77–Leu99. Residues Ser100–Arg148 lie on the Cytoplasmic side of the membrane. A helical transmembrane segment spans residues Gly149 to Tyr171. Residues Gly172–Ile208 lie on the Extracellular side of the membrane. The chain crosses the membrane as a helical span at residues Phe209–Leu231. Residues Leu232–Val333 lie on the Cytoplasmic side of the membrane. Residues Ala292–Val333 are disordered. The segment covering Lys318–Val333 has biased composition (low complexity).

The protein belongs to the connexin family. Alpha-type (group II) subfamily. As to quaternary structure, a connexon is composed of a hexamer of connexins. As to expression, highly expressed in lung.

It is found in the cell membrane. The protein resides in the cell junction. It localises to the gap junction. In terms of biological role, one gap junction consists of a cluster of closely packed pairs of transmembrane channels, the connexons, through which materials of low MW diffuse from one cell to a neighboring cell. In Rattus norvegicus (Rat), this protein is Gap junction alpha-4 protein (Gja4).